Here is a 707-residue protein sequence, read N- to C-terminus: SPX domain-containing membrane protein At4g11810 (707 aa).

Residues 2–145 (VAFGKKLKER…GYRFTNYYVK (144 aa)) form the SPX domain. 6 consecutive transmembrane segments (helical) span residues 252–272 (FMSL…TYII), 283–303 (LGAA…AQLF), 320–340 (LIFS…AYDF), 342–361 (SLAL…ARAV), 380–400 (AGFV…AGLL), and 416–436 (LPGW…AISF). The span at 481–498 (EETEHDEEDDGDGSEESS) shows a compositional bias: acidic residues. Residues 481–503 (EETEHDEEDDGDGSEESSDDSRK) are disordered. The next 5 membrane-spanning stretches (helical) occupy residues 523 to 543 (LLIY…SSVV), 557 to 577 (IFLF…GSYI), 586 to 606 (ILLA…HVVI), 614 to 634 (VISG…NLSL), and 679 to 699 (MLLN…ILAT).

It belongs to the major facilitator superfamily.

It localises to the membrane. The chain is SPX domain-containing membrane protein At4g11810 from Arabidopsis thaliana (Mouse-ear cress).